Consider the following 250-residue polypeptide: Menaquinol:cytochrome c reductase cytochrome c subunit (250 aa).

The next 3 membrane-spanning stretches (helical) occupy residues 46-62, 104-124, and 137-157; these read WLVG…LTVA, VIGA…APFL, and VATG…WESV. Positions 178-250 constitute a Cytochrome c domain; it reads DTNAEGYKIA…LQKMANSSPA (73 aa). Heme c is bound by residues C192, C195, and H196. The tract at residues 229 to 250 is disordered; the sequence is MPGGIFKGTDEELQKMANSSPA.

It belongs to the cytochrome b family. The main subunits of the menaquinol:cytochrome c complex are a Rieske-type iron-sulfur protein (QcrA), a cytochrome b (QcrB) and a cytochrome c (QcrC). Requires heme c as cofactor.

The protein resides in the cell membrane. Component of the menaquinol:cytochrome c reductase complex. The polypeptide is Menaquinol:cytochrome c reductase cytochrome c subunit (qcrC) (Geobacillus thermodenitrificans).